The primary structure comprises 172 residues: Protein-export protein SecB (172 aa).

It belongs to the SecB family. Homotetramer, a dimer of dimers. One homotetramer interacts with 1 SecA dimer.

The protein resides in the cytoplasm. In terms of biological role, one of the proteins required for the normal export of preproteins out of the cell cytoplasm. It is a molecular chaperone that binds to a subset of precursor proteins, maintaining them in a translocation-competent state. It also specifically binds to its receptor SecA. In Haemophilus ducreyi (strain 35000HP / ATCC 700724), this protein is Protein-export protein SecB.